Reading from the N-terminus, the 153-residue chain is uncharacterized protein (153 aa).

The first 18 residues, methionine 1–alanine 18, serve as a signal peptide directing secretion. Asparagine 19 and asparagine 25 each carry an N-linked (GlcNAc...) asparagine glycan. The Extracellular portion of the chain corresponds to asparagine 19–threonine 43. Residues leucine 44–phenylalanine 64 traverse the membrane as a helical segment. Residues histidine 65 to serine 153 lie on the Cytoplasmic side of the membrane. The tract at residues lysine 75–glutamine 115 is disordered. Basic and acidic residues predominate over residues glutamate 77–histidine 96.

The protein localises to the membrane. This is an uncharacterized protein from Xenopus tropicalis (Western clawed frog).